Consider the following 187-residue polypeptide: Elongation factor P (187 aa).

Lys34 bears the N6-(3,6-diaminohexanoyl)-5-hydroxylysine mark.

This sequence belongs to the elongation factor P family. Post-translationally, may be beta-lysylated on the epsilon-amino group of Lys-34 by the combined action of EpmA and EpmB, and then hydroxylated on the C5 position of the same residue by EpmC (if this protein is present). Lysylation is critical for the stimulatory effect of EF-P on peptide-bond formation. The lysylation moiety may extend toward the peptidyltransferase center and stabilize the terminal 3-CCA end of the tRNA. Hydroxylation of the C5 position on Lys-34 may allow additional potential stabilizing hydrogen-bond interactions with the P-tRNA.

Its subcellular location is the cytoplasm. Its pathway is protein biosynthesis; polypeptide chain elongation. Its function is as follows. Involved in peptide bond synthesis. Alleviates ribosome stalling that occurs when 3 or more consecutive Pro residues or the sequence PPG is present in a protein, possibly by augmenting the peptidyl transferase activity of the ribosome. Modification of Lys-34 is required for alleviation. The chain is Elongation factor P from Vesicomyosocius okutanii subsp. Calyptogena okutanii (strain HA).